Here is a 308-residue protein sequence, read N- to C-terminus: MSLTAGLTDARPDTVETATVAVIGTGAIGRDLVSKIDRSPGLDCRLVAGRNPESAGLRYAESLGCATTAAGIDAVLAASPFDVVFDATSAASHRDHWPLLEPLGTLVIDLTPSKVGQMVAPTVTGVAAEDARNVNLISCGGQASVPVVHALAARFPVTYLEVVSTVASDVAGRATRLNLDEYVTATGHAVTTFSGVSDVKIILNISPAVPPATFRTVIHARVPDADAAAVRAVVDRAAEQVRSFAPGYEVVACTAADDLVTIVLKVTACSDVLPPYAGNLDIINAAAVLVAEQYAARPGRVSRTGVSS.

NAD(+) is bound at residue 25 to 28 (TGAI). Catalysis depends on Cys-139, which acts as the Acyl-thioester intermediate. Asn-279 is an NAD(+) binding site.

This sequence belongs to the acetaldehyde dehydrogenase family.

The catalysed reaction is acetaldehyde + NAD(+) + CoA = acetyl-CoA + NADH + H(+). The sequence is that of Acetaldehyde dehydrogenase from Streptomyces griseus subsp. griseus (strain JCM 4626 / CBS 651.72 / NBRC 13350 / KCC S-0626 / ISP 5235).